Reading from the N-terminus, the 498-residue chain is MASQGTKRSYEQMETDGERQNATEIRASVGKMIGGIGRFYIQMCTELKLNDYEGRLIQNSLTIERMVLSAFDERRNKYLEEHPSAGKDPKKTGGPIYKRVDGKWMRKLVLYDKEEIRRIWRQANNGDDATAGLTHMMIWHSNLNDTTYQRTRALVRTGMDPRMCSLMQGSTLPRRSGAAGAAVKGVGTMVLELIRMIKRGINDRNFWRGENGRKTRIAYERMCNILKGKFQTAAQRAMMDQVRESRNPGNAEIEDLTFLARSALILRGSVAHKSCLPACVYGPAVASGYDFEKEGYSLVGIDPFKLLQTSQVYSLIRSNENPAHKSQLVWMACNSAAFEDLRVSSFIRGTKVIPRGKLSTRGVQIASNENMDTMVSSTLELRSRYWAIRTRSGGNTNQQRASAGQISIQPTFSVQRNLPFDKTTIMAAFTGNAEGRTSDMRAEIIKMMESARPEEVSFQGRGVFELSDERAANPIVPSFDMSNEGSYFFGDNAEEYDN.

The short motif at 1-18 (MASQGTKRSYEQMETDGE) is the Unconventional nuclear localization signal element. A disordered region spans residues 1–21 (MASQGTKRSYEQMETDGERQN). Residues 8–21 (RSYEQMETDGERQN) are compositionally biased toward basic and acidic residues. The Bipartite nuclear localization signal motif lies at 198–216 (KRGINDRNFWRGENGRKTR).

This sequence belongs to the influenza viruses nucleoprotein family. In terms of assembly, homomultimerizes to form the nucleocapsid. May bind host exportin-1/XPO1. Binds to viral genomic RNA. Protein-RNA contacts are mediated by a combination of electrostatic interactions between positively charged residues and the phosphate backbone and planar interactions between aromatic side chains and bases. Post-translationally, late in virus-infected cells, may be cleaved from a 56-kDa protein to a 53-kDa protein by a cellular caspase. This cleavage might be a marker for the onset of apoptosis in infected cells or have a specific function in virus host interaction.

It localises to the virion. The protein resides in the host nucleus. Encapsidates the negative strand viral RNA, protecting it from nucleases. The encapsidated genomic RNA is termed the ribonucleoprotein (RNP) and serves as template for transcription and replication. The RNP needs to be localized in the host nucleus to start an infectious cycle, but is too large to diffuse through the nuclear pore complex. NP comprises at least 2 nuclear localization signals that are responsible for the active RNP import into the nucleus through cellular importin alpha/beta pathway. Later in the infection, nclear export of RNPs are mediated through viral proteins NEP interacting with M1 which binds nucleoproteins. It is possible that nucleoprotein binds directly host exportin-1/XPO1 and plays an active role in RNPs nuclear export. M1 interaction with RNP seems to hide nucleoprotein's nuclear localization signals. Soon after a virion infects a new cell, M1 dissociates from the RNP under acidification of the virion driven by M2 protein. Dissociation of M1 from RNP unmasks nucleoprotein's nuclear localization signals, targeting the RNP to the nucleus. The protein is Nucleoprotein of Aves (Human).